Reading from the N-terminus, the 426-residue chain is UPF0597 protein CLI_1810 (426 aa).

It belongs to the UPF0597 family.

This is UPF0597 protein CLI_1810 from Clostridium botulinum (strain Langeland / NCTC 10281 / Type F).